The sequence spans 444 residues: Homogentisate 1,2-dioxygenase (444 aa).

H298 functions as the Proton acceptor in the catalytic mechanism. H341 and E347 together coordinate Fe cation. Homogentisate is bound by residues Y356 and H377. H377 contacts Fe cation.

It belongs to the homogentisate dioxygenase family. As to quaternary structure, hexamer; dimer of trimers. It depends on Fe cation as a cofactor.

The enzyme catalyses homogentisate + O2 = 4-maleylacetoacetate + H(+). It participates in amino-acid degradation; L-phenylalanine degradation; acetoacetate and fumarate from L-phenylalanine: step 4/6. Functionally, involved in the catabolism of homogentisate (2,5-dihydroxyphenylacetate or 2,5-OH-PhAc), a central intermediate in the degradation of phenylalanine and tyrosine. Catalyzes the oxidative ring cleavage of the aromatic ring of homogentisate to yield maleylacetoacetate. This chain is Homogentisate 1,2-dioxygenase, found in Burkholderia orbicola (strain AU 1054).